The primary structure comprises 659 residues: Oligopeptide-binding protein AmiA (659 aa).

An N-terminal signal peptide occupies residues 1–22 (MKKNRVFATAGLVLLAAGVLAA). A lipid anchor (N-palmitoyl cysteine) is attached at Cys-23. Cys-23 carries S-diacylglycerol cysteine lipidation.

This sequence belongs to the bacterial solute-binding protein 5 family.

It is found in the cell membrane. Functionally, part of the binding-protein-dependent transport system for oligopeptides; probably an oligopeptide binding protein. This chain is Oligopeptide-binding protein AmiA (amiA), found in Streptococcus pneumoniae serotype 4 (strain ATCC BAA-334 / TIGR4).